Consider the following 934-residue polypeptide: Bifunctional uridylyltransferase/uridylyl-removing enzyme (934 aa).

The tract at residues 1-379 is uridylyltransferase; sequence MSAHDLKLEE…TFSRRKRKLS (379 aa). Positions 380–736 are uridylyl-removing; sequence DDGAFISENH…AKPHAFEAVT (357 aa). The 118-residue stretch at 496-613 folds into the HD domain; that stretch reads VDEHLLRCIA…IDFADTVQTM (118 aa). ACT domains lie at 737-818 and 848-931; these read EITV…DMLA and VIEV…RSPQ.

It belongs to the GlnD family. Mg(2+) serves as cofactor.

It catalyses the reaction [protein-PII]-L-tyrosine + UTP = [protein-PII]-uridylyl-L-tyrosine + diphosphate. It carries out the reaction [protein-PII]-uridylyl-L-tyrosine + H2O = [protein-PII]-L-tyrosine + UMP + H(+). With respect to regulation, uridylyltransferase (UTase) activity is inhibited by glutamine, while glutamine activates uridylyl-removing (UR) activity. In terms of biological role, modifies, by uridylylation and deuridylylation, the PII regulatory proteins (GlnB and homologs), in response to the nitrogen status of the cell that GlnD senses through the glutamine level. Under low glutamine levels, catalyzes the conversion of the PII proteins and UTP to PII-UMP and PPi, while under higher glutamine levels, GlnD hydrolyzes PII-UMP to PII and UMP (deuridylylation). Thus, controls uridylylation state and activity of the PII proteins, and plays an important role in the regulation of nitrogen assimilation and metabolism. In Brucella suis (strain ATCC 23445 / NCTC 10510), this protein is Bifunctional uridylyltransferase/uridylyl-removing enzyme.